A 168-amino-acid polypeptide reads, in one-letter code: MAILTILEFPDPRLRTIAKPIETVDDGIRRLIDDMFETMYAAPGIGLAATQVNVHKRLVVMDLSEDKNEPRVFINPEFEALTEELEPYQEGCLSVPGFYENVDRPQKVRIRALDRDGQPFELVAEGLLAVCIQHECDHLNGKLFVDYLSTLKRDRIRKKLEKQHRQHG.

Residues cysteine 92 and histidine 134 each coordinate Fe cation. Residue glutamate 135 is part of the active site. Position 138 (histidine 138) interacts with Fe cation.

It belongs to the polypeptide deformylase family. Fe(2+) serves as cofactor.

The enzyme catalyses N-terminal N-formyl-L-methionyl-[peptide] + H2O = N-terminal L-methionyl-[peptide] + formate. Its function is as follows. Removes the formyl group from the N-terminal Met of newly synthesized proteins. Requires at least a dipeptide for an efficient rate of reaction. N-terminal L-methionine is a prerequisite for activity but the enzyme has broad specificity at other positions. This chain is Peptide deformylase, found in Azotobacter vinelandii (strain DJ / ATCC BAA-1303).